A 240-amino-acid polypeptide reads, in one-letter code: Late expression factor 5 homolog (240 aa).

Belongs to the baculoviridae LEF-5 family.

Required for late and very late gene expression. This Tortricidae (ClGV) protein is Late expression factor 5 homolog.